The primary structure comprises 581 residues: Arginine--tRNA ligase (581 aa).

A 'HIGH' region motif is present at residues proline 126 to histidine 136.

Belongs to the class-I aminoacyl-tRNA synthetase family. In terms of assembly, monomer.

It is found in the cytoplasm. The enzyme catalyses tRNA(Arg) + L-arginine + ATP = L-arginyl-tRNA(Arg) + AMP + diphosphate. The sequence is that of Arginine--tRNA ligase from Shewanella pealeana (strain ATCC 700345 / ANG-SQ1).